Consider the following 1356-residue polypeptide: DNA-directed RNA polymerase subunit beta (1356 aa).

This sequence belongs to the RNA polymerase beta chain family. In terms of assembly, the RNAP catalytic core consists of 2 alpha, 1 beta, 1 beta' and 1 omega subunit. When a sigma factor is associated with the core the holoenzyme is formed, which can initiate transcription.

It carries out the reaction RNA(n) + a ribonucleoside 5'-triphosphate = RNA(n+1) + diphosphate. DNA-dependent RNA polymerase catalyzes the transcription of DNA into RNA using the four ribonucleoside triphosphates as substrates. This Caulobacter vibrioides (strain ATCC 19089 / CIP 103742 / CB 15) (Caulobacter crescentus) protein is DNA-directed RNA polymerase subunit beta.